Here is a 264-residue protein sequence, read N- to C-terminus: tRNA pseudouridine synthase A (264 aa).

The active-site Nucleophile is Asp51. Tyr109 contributes to the substrate binding site.

Belongs to the tRNA pseudouridine synthase TruA family. As to quaternary structure, homodimer.

The enzyme catalyses uridine(38/39/40) in tRNA = pseudouridine(38/39/40) in tRNA. Formation of pseudouridine at positions 38, 39 and 40 in the anticodon stem and loop of transfer RNAs. This is tRNA pseudouridine synthase A from Pasteurella multocida (strain Pm70).